The primary structure comprises 137 residues: uncharacterized protein (137 aa).

An N-terminal signal peptide occupies residues 1–34; the sequence is MAALSRALGPLRTPAPPLWIGLFLVATGSQQSLA. Residues 33–45 are compositionally biased toward polar residues; it reads LAQPLPGNTTEAT. Disordered regions lie at residues 33-54 and 98-137; these read LAQP…ASGS and VLSP…LGAS. Asn-40 carries N-linked (GlcNAc...) asparagine glycosylation. Positions 121 to 137 are enriched in basic and acidic residues; it reads KLKEPQPQDHKPGLGAS.

It is found in the secreted. This is an uncharacterized protein from Homo sapiens (Human).